The following is a 177-amino-acid chain: GTP-dependent dephospho-CoA kinase (177 aa).

Residues aspartate 48, valine 49, valine 50, aspartate 67, lysine 69, and glutamate 124 each coordinate GTP.

This sequence belongs to the GTP-dependent DPCK family.

It catalyses the reaction 3'-dephospho-CoA + GTP = GDP + CoA + H(+). Its pathway is cofactor biosynthesis; coenzyme A biosynthesis. Functionally, catalyzes the GTP-dependent phosphorylation of the 3'-hydroxyl group of dephosphocoenzyme A to form coenzyme A (CoA). The chain is GTP-dependent dephospho-CoA kinase from Pyrococcus furiosus (strain ATCC 43587 / DSM 3638 / JCM 8422 / Vc1).